A 71-amino-acid polypeptide reads, in one-letter code: ATP synthase subunit c (71 aa).

The next 2 helical transmembrane spans lie at 4–24 (AVIG…GIGI) and 48–68 (IIGA…AFMI).

This sequence belongs to the ATPase C chain family. In terms of assembly, F-type ATPases have 2 components, F(1) - the catalytic core - and F(0) - the membrane proton channel. F(1) has five subunits: alpha(3), beta(3), gamma(1), delta(1), epsilon(1). F(0) has three main subunits: a(1), b(2) and c(10-14). The alpha and beta chains form an alternating ring which encloses part of the gamma chain. F(1) is attached to F(0) by a central stalk formed by the gamma and epsilon chains, while a peripheral stalk is formed by the delta and b chains.

The protein localises to the cell membrane. F(1)F(0) ATP synthase produces ATP from ADP in the presence of a proton or sodium gradient. F-type ATPases consist of two structural domains, F(1) containing the extramembraneous catalytic core and F(0) containing the membrane proton channel, linked together by a central stalk and a peripheral stalk. During catalysis, ATP synthesis in the catalytic domain of F(1) is coupled via a rotary mechanism of the central stalk subunits to proton translocation. Functionally, key component of the F(0) channel; it plays a direct role in translocation across the membrane. A homomeric c-ring of between 10-14 subunits forms the central stalk rotor element with the F(1) delta and epsilon subunits. This Clostridium botulinum (strain Alaska E43 / Type E3) protein is ATP synthase subunit c.